We begin with the raw amino-acid sequence, 443 residues long: 23S rRNA (uracil(1939)-C(5))-methyltransferase RlmD (443 aa).

Residues 12-70 enclose the TRAM domain; sequence AKKLSQKIALKVQRLDHLGAGIAEHQGKVVFIPGALPGETVEVQLTEQKKNYARAKLQR. [4Fe-4S] cluster-binding residues include Cys83, Cys89, Cys92, and Cys171. Residues Gln276, Phe305, Asn310, Glu326, Asp353, and Asp373 each coordinate S-adenosyl-L-methionine. Cys399 functions as the Nucleophile in the catalytic mechanism.

Belongs to the class I-like SAM-binding methyltransferase superfamily. RNA M5U methyltransferase family. RlmD subfamily.

The enzyme catalyses uridine(1939) in 23S rRNA + S-adenosyl-L-methionine = 5-methyluridine(1939) in 23S rRNA + S-adenosyl-L-homocysteine + H(+). Its function is as follows. Catalyzes the formation of 5-methyl-uridine at position 1939 (m5U1939) in 23S rRNA. The polypeptide is 23S rRNA (uracil(1939)-C(5))-methyltransferase RlmD (Shewanella amazonensis (strain ATCC BAA-1098 / SB2B)).